We begin with the raw amino-acid sequence, 122 residues long: UPF0102 protein Atu0303 (122 aa).

This sequence belongs to the UPF0102 family.

This Agrobacterium fabrum (strain C58 / ATCC 33970) (Agrobacterium tumefaciens (strain C58)) protein is UPF0102 protein Atu0303.